We begin with the raw amino-acid sequence, 224 residues long: UPF0758 protein BLi02933/BL00636 (224 aa).

Positions 102 to 224 (VIRFPEDAAN…FVSLKEKGYL (123 aa)) constitute an MPN domain. Zn(2+)-binding residues include H173, H175, and D186. Residues 173–186 (HNHPSGDPAPSRED) carry the JAMM motif motif.

It belongs to the UPF0758 family.

In Bacillus licheniformis (strain ATCC 14580 / DSM 13 / JCM 2505 / CCUG 7422 / NBRC 12200 / NCIMB 9375 / NCTC 10341 / NRRL NRS-1264 / Gibson 46), this protein is UPF0758 protein BLi02933/BL00636.